We begin with the raw amino-acid sequence, 154 residues long: Myoglobin (154 aa).

In terms of domain architecture, Globin spans 2 to 148; sequence VLSEGEWQLV…FRKDIAAKYK (147 aa). Serine 4 carries the post-translational modification Phosphoserine. Histidine 65 lines the nitrite pocket. Histidine 65 is a binding site for O2. Position 68 is a phosphothreonine (threonine 68). Position 94 (histidine 94) interacts with heme b.

This sequence belongs to the globin family. As to quaternary structure, monomeric.

Its subcellular location is the cytoplasm. It localises to the sarcoplasm. It catalyses the reaction Fe(III)-heme b-[protein] + nitric oxide + H2O = Fe(II)-heme b-[protein] + nitrite + 2 H(+). The enzyme catalyses H2O2 + AH2 = A + 2 H2O. Monomeric heme protein which primary function is to store oxygen and facilitate its diffusion within muscle tissues. Reversibly binds oxygen through a pentacoordinated heme iron and enables its timely and efficient release as needed during periods of heightened demand. Depending on the oxidative conditions of tissues and cells, and in addition to its ability to bind oxygen, it also has a nitrite reductase activity whereby it regulates the production of bioactive nitric oxide. Under stress conditions, like hypoxia and anoxia, it also protects cells against reactive oxygen species thanks to its pseudoperoxidase activity. The protein is Myoglobin (MB) of Physeter macrocephalus (Sperm whale).